The following is a 548-amino-acid chain: Chaperonin GroEL (548 aa).

ATP is bound by residues 30–33 (TLGP), K51, 87–91 (DGTTT), G415, and D495.

Belongs to the chaperonin (HSP60) family. Forms a cylinder of 14 subunits composed of two heptameric rings stacked back-to-back. Interacts with the co-chaperonin GroES.

The protein resides in the cytoplasm. The catalysed reaction is ATP + H2O + a folded polypeptide = ADP + phosphate + an unfolded polypeptide.. Together with its co-chaperonin GroES, plays an essential role in assisting protein folding. The GroEL-GroES system forms a nano-cage that allows encapsulation of the non-native substrate proteins and provides a physical environment optimized to promote and accelerate protein folding. The polypeptide is Chaperonin GroEL (Photorhabdus laumondii subsp. laumondii (strain DSM 15139 / CIP 105565 / TT01) (Photorhabdus luminescens subsp. laumondii)).